The chain runs to 91 residues: Small ribosomal subunit protein uS17 (91 aa).

This sequence belongs to the universal ribosomal protein uS17 family. Part of the 30S ribosomal subunit.

One of the primary rRNA binding proteins, it binds specifically to the 5'-end of 16S ribosomal RNA. This Saccharopolyspora erythraea (strain ATCC 11635 / DSM 40517 / JCM 4748 / NBRC 13426 / NCIMB 8594 / NRRL 2338) protein is Small ribosomal subunit protein uS17.